The sequence spans 215 residues: LexA repressor (215 aa).

Residues 28 to 48 (RAEIAAELGFSSPNAAEEHLR) constitute a DNA-binding region (H-T-H motif). Active-site for autocatalytic cleavage activity residues include Ser-133 and Lys-170.

The protein belongs to the peptidase S24 family. As to quaternary structure, homodimer.

The enzyme catalyses Hydrolysis of Ala-|-Gly bond in repressor LexA.. Its function is as follows. Represses a number of genes involved in the response to DNA damage (SOS response), including recA and lexA. In the presence of single-stranded DNA, RecA interacts with LexA causing an autocatalytic cleavage which disrupts the DNA-binding part of LexA, leading to derepression of the SOS regulon and eventually DNA repair. In Burkholderia vietnamiensis (strain G4 / LMG 22486) (Burkholderia cepacia (strain R1808)), this protein is LexA repressor.